The chain runs to 274 residues: 3-methyl-2-oxobutanoate hydroxymethyltransferase (274 aa).

Positions 49 and 88 each coordinate Mg(2+). 3-methyl-2-oxobutanoate-binding positions include 49 to 50 (DS), D88, and K118. E120 contacts Mg(2+). E187 serves as the catalytic Proton acceptor.

Belongs to the PanB family. As to quaternary structure, homodecamer; pentamer of dimers. Mg(2+) is required as a cofactor.

It localises to the cytoplasm. It carries out the reaction 3-methyl-2-oxobutanoate + (6R)-5,10-methylene-5,6,7,8-tetrahydrofolate + H2O = 2-dehydropantoate + (6S)-5,6,7,8-tetrahydrofolate. Its pathway is cofactor biosynthesis; (R)-pantothenate biosynthesis; (R)-pantoate from 3-methyl-2-oxobutanoate: step 1/2. In terms of biological role, catalyzes the reversible reaction in which hydroxymethyl group from 5,10-methylenetetrahydrofolate is transferred onto alpha-ketoisovalerate to form ketopantoate. This is 3-methyl-2-oxobutanoate hydroxymethyltransferase from Rhodopseudomonas palustris (strain BisB18).